Consider the following 85-residue polypeptide: Large ribosomal subunit protein bL27 (85 aa).

The segment at 1–20 (MAHKKAGGSTRNGRDSEAKR) is disordered.

This sequence belongs to the bacterial ribosomal protein bL27 family.

This Proteus mirabilis (strain HI4320) protein is Large ribosomal subunit protein bL27.